Here is a 151-residue protein sequence, read N- to C-terminus: Transcriptional repressor NrdR (151 aa).

A zinc finger lies at 3 to 34 (CPYCGYGESKVVDSRATDDKMAIRRRRECLKC). The 91-residue stretch at 49-139 (LLVIKKNMSR…VYRQFKDINT (91 aa)) folds into the ATP-cone domain.

It belongs to the NrdR family. Requires Zn(2+) as cofactor.

Functionally, negatively regulates transcription of bacterial ribonucleotide reductase nrd genes and operons by binding to NrdR-boxes. This chain is Transcriptional repressor NrdR, found in Clostridium kluyveri (strain NBRC 12016).